The chain runs to 305 residues: Alpha-N-acetylgalactosaminide alpha-2,6-sialyltransferase 3 (305 aa).

Residues 1–8 (MACILKRK) are Cytoplasmic-facing. Residues 9-28 (SVIAVSFIAAFLFLLVVRLV) form a helical; Signal-anchor for type II membrane protein membrane-spanning segment. The Lumenal segment spans residues 29–305 (NEVNFPLLLN…IFTHPNWTLS (277 aa)). Residues C80 and C229 are joined by a disulfide bond. N-linked (GlcNAc...) asparagine glycosylation is found at N148, N239, and N301.

It belongs to the glycosyltransferase 29 family. In terms of tissue distribution, expressed in brain and kidney. Observed in the epithelium of the proximal tubules, marginal expression was also found in the distal tubules and collecting tubules.

It is found in the golgi apparatus membrane. It catalyses the reaction an alpha-Neu5Ac-(2-&gt;3)-beta-D-Gal-(1-&gt;3)-D-GlcNAc derivative + CMP-N-acetyl-beta-neuraminate = an alpha-Neu5Ac-(2-&gt;3)-beta-D-Gal-(1-&gt;3)-[alpha-Neu5Ac-(2-&gt;6)]-D-GlcNAc derivative + CMP + H(+). It carries out the reaction a ganglioside GM1b (d18:1(4E)) + CMP-N-acetyl-beta-neuraminate = a ganglioside GD1alpha (d18:1(4E)) + CMP + H(+). The catalysed reaction is a globoside MSGG + CMP-N-acetyl-beta-neuraminate = a globoside DSGG + CMP + H(+). The enzyme catalyses 3-O-[alpha-Neu5Ac-(2-&gt;3)-beta-D-Gal-(1-&gt;3)-alpha-D-GalNAc]-L-Ser-[protein] + CMP-N-acetyl-beta-neuraminate = a 3-O-{alpha-Neu5Ac-(2-&gt;3)-beta-D-Gal-(1-&gt;3)-[alpha-Neu5Ac-(2-&gt;6)]-alpha-D-GalNAc}-L-seryl-[protein] + CMP + H(+). It catalyses the reaction 3-O-[alpha-Neu5Ac-(2-&gt;3)-beta-D-Gal-(1-&gt;3)-alpha-D-GalNAc]-L-Thr-[protein] + CMP-N-acetyl-beta-neuraminate = a 3-O-{alpha-Neu5Ac-(2-&gt;3)-beta-D-Gal-(1-&gt;3)-[alpha-Neu5Ac-(2-&gt;6)]-alpha-D-GalNAc}-L-threonyl-[protein] + CMP + H(+). Its pathway is protein modification; protein glycosylation. It participates in glycolipid biosynthesis. Transfers the sialyl group (N-acetyl-alpha-neuraminyl or NeuAc) from CMP-NeuAc to the GalNAc residue on the NeuAc-alpha-2,3-Gal-beta-1,3-GalNAc sequence of glycoproteins and glycolipids forming an alpha-2,6-linkage. Produces branched type disialyl structures by transfer of a sialyl group onto a GalNAc residue inside the backbone core chains. ST6GalNAcIII prefers glycolipids to glycoproteins, predominantly catalyzing the biosynthesis of ganglioside GD1alpha from GM1b. GD1alpha is a critical molecule in the communication and interaction between neuronal cells and their supportive cells, particularly in brain tissues, and functions as an adhesion molecule in the process of metastasis. Sialylation of glycoproteins or glycosphingolipids is very important in tumor development, neuronal development, nerve repair, immunological processes and regulation of hormone sensitivity. The protein is Alpha-N-acetylgalactosaminide alpha-2,6-sialyltransferase 3 (ST6GALNAC3) of Homo sapiens (Human).